Reading from the N-terminus, the 227-residue chain is Cytidylate kinase (227 aa).

Glycine 10–threonine 18 contributes to the ATP binding site.

The protein belongs to the cytidylate kinase family. Type 1 subfamily.

It is found in the cytoplasm. The catalysed reaction is CMP + ATP = CDP + ADP. The enzyme catalyses dCMP + ATP = dCDP + ADP. This Streptococcus agalactiae serotype V (strain ATCC BAA-611 / 2603 V/R) protein is Cytidylate kinase.